The sequence spans 294 residues: ATP synthase gamma chain (294 aa).

This sequence belongs to the ATPase gamma chain family. As to quaternary structure, F-type ATPases have 2 components, CF(1) - the catalytic core - and CF(0) - the membrane proton channel. CF(1) has five subunits: alpha(3), beta(3), gamma(1), delta(1), epsilon(1). CF(0) has three main subunits: a, b and c.

It localises to the cell inner membrane. In terms of biological role, produces ATP from ADP in the presence of a proton gradient across the membrane. The gamma chain is believed to be important in regulating ATPase activity and the flow of protons through the CF(0) complex. This is ATP synthase gamma chain from Campylobacter jejuni subsp. jejuni serotype O:2 (strain ATCC 700819 / NCTC 11168).